Here is a 339-residue protein sequence, read N- to C-terminus: Geranylgeranyl pyrophosphate synthase AN1592 (339 aa).

Residues lysine 41, arginine 44, and histidine 73 each contribute to the isopentenyl diphosphate site. Mg(2+)-binding residues include aspartate 80 and aspartate 84. Position 89 (arginine 89) interacts with dimethylallyl diphosphate. Residue arginine 90 coordinates isopentenyl diphosphate. Dimethylallyl diphosphate-binding residues include lysine 192, threonine 193, and glutamine 228. Aspartate 231 contacts Mg(2+). Dimethylallyl diphosphate-binding residues include asparagine 235, lysine 245, and lysine 255.

It belongs to the FPP/GGPP synthase family. The cofactor is Mg(2+).

The catalysed reaction is isopentenyl diphosphate + dimethylallyl diphosphate = (2E)-geranyl diphosphate + diphosphate. The enzyme catalyses isopentenyl diphosphate + (2E)-geranyl diphosphate = (2E,6E)-farnesyl diphosphate + diphosphate. It catalyses the reaction isopentenyl diphosphate + (2E,6E)-farnesyl diphosphate = (2E,6E,10E)-geranylgeranyl diphosphate + diphosphate. Its pathway is secondary metabolite biosynthesis. Its function is as follows. Geranylgeranyl pyrophosphate synthase; part of the gene cluster that mediates the biosynthesis of erinacines, cyathane-xylosides that show unique biological activities, including leishmanicidal activity, stimulating activity for nerve growth-factor synthesis, and agonistic activity toward the kappa opioid receptor. The geranylgeranyl diphosphate (GGPP) synthase eriE catalyzes the first step in erinacines biosynthesis via conversion of farnesyl pyrophosphate and isopentyl pyrophosphate into geranylgeranyl pyrophosphate (GGPP). GGPP is then substrate of the diterpene cyclase eriG for the production of cyatha-3,12-diene. The cytochrome P450 monooxygenase eriI then hydroxylates cyatha-3,12-diene at C-14 of the seven-membered ring to produce erinacol, which is further hydroxylated at C-15 by the cytochrome P450 monooxygenase eriC to yield cyathadiol. The cytochrome P450 monooxygenase eriA then catalyzes C-11 hydroxylation in the presence of the short chain dehydrogenase/reductase (SDR) eriH, which leads to the production of cyathatriol. The acetyltransferase eriL converts cyathatriol into 11-O-acetyl-cyathatriol. The SDR eriH catalyzes further oxidation of 11-O-acetyl-cyathatriol into 1-O-acetylcyathin A3. Finally, the glycosyl transferase eriJ tranfers xylose from UDP-xylose onto C-14 of 11-O-acetyl-cyathatriol to form eracine Q. EriJ is also able to convert 11-O-acetyl-cyathatriol to eracine Q2 by using UDP-D-glucose as cosubstrate, but at a lower rate. In the absence of eriL and eriJ, the SDR eriH is able to convert cyathatriol to cyathin A3; this is likely a switching mechanism in the biosynthesis of cyathins (C-14 ketogroup)and erinacines (C-14 glycosylated group). The roles of the SDR eriB, the polyprenyl transferase eriF and the dehydrogenase eriK have still to be identified. The protein is Geranylgeranyl pyrophosphate synthase AN1592 of Hericium erinaceus (Lion's mane mushroom).